Consider the following 122-residue polypeptide: Large ribosomal subunit protein uL14 (122 aa).

This sequence belongs to the universal ribosomal protein uL14 family. In terms of assembly, part of the 50S ribosomal subunit. Forms a cluster with proteins L3 and L19. In the 70S ribosome, L14 and L19 interact and together make contacts with the 16S rRNA in bridges B5 and B8.

Functionally, binds to 23S rRNA. Forms part of two intersubunit bridges in the 70S ribosome. The chain is Large ribosomal subunit protein uL14 from Desulfotalea psychrophila (strain LSv54 / DSM 12343).